Reading from the N-terminus, the 540-residue chain is Protein PALS2 (540 aa).

L27 domains lie at 1–48 (MQQV…EDSK) and 49–107 (LEAV…YDSP). Positions 130–209 (ILGIHKRAGE…SVTLKILPSY (80 aa)) constitute a PDZ domain. The SH3 domain maps to 215–284 (PQQVFVKCHF…PSQFLEEKRK (70 aa)). In terms of domain architecture, Guanylate kinase-like spans 338-525 (RKTLVLIGAQ…AFEKLQTAIE (188 aa)). At tyrosine 500 the chain carries Phosphotyrosine.

This sequence belongs to the MAGUK family. As to quaternary structure, interacts with CADM1. Interacts with the LIN7 proteins. In terms of tissue distribution, abundant in testis, brain, and kidney with lower levels detectable in other tissues.

Its subcellular location is the membrane. This chain is Protein PALS2, found in Homo sapiens (Human).